A 122-amino-acid chain; its full sequence is Small ribosomal subunit protein uS13 (122 aa).

The tract at residues 95–122 (GLPVRGQRTHTNARTRKGPRRGTVGKKK) is disordered.

It belongs to the universal ribosomal protein uS13 family. As to quaternary structure, part of the 30S ribosomal subunit. Forms a loose heterodimer with protein S19. Forms two bridges to the 50S subunit in the 70S ribosome.

Functionally, located at the top of the head of the 30S subunit, it contacts several helices of the 16S rRNA. In the 70S ribosome it contacts the 23S rRNA (bridge B1a) and protein L5 of the 50S subunit (bridge B1b), connecting the 2 subunits; these bridges are implicated in subunit movement. Contacts the tRNAs in the A and P-sites. This chain is Small ribosomal subunit protein uS13, found in Nitratidesulfovibrio vulgaris (strain ATCC 29579 / DSM 644 / CCUG 34227 / NCIMB 8303 / VKM B-1760 / Hildenborough) (Desulfovibrio vulgaris).